We begin with the raw amino-acid sequence, 110 residues long: U1-lycotoxin-Ls1jj (110 aa).

The N-terminal stretch at 1–20 (MKFVLLFGVLLVTLFSYSSA) is a signal peptide. A propeptide spanning residues 21 to 44 (EMLDDFDQADEDELLSLIEKEEAR) is cleaved from the precursor. Intrachain disulfides connect C47-C62, C54-C71, C61-C89, and C73-C87.

It belongs to the neurotoxin 19 (CSTX) family. 03 subfamily. As to expression, expressed by the venom gland.

The protein resides in the secreted. The polypeptide is U1-lycotoxin-Ls1jj (Lycosa singoriensis (Wolf spider)).